A 471-amino-acid chain; its full sequence is Histone deacetylase 6 (471 aa).

Met-1 is subject to N-acetylmethionine. The segment at 20-333 is histone deacetylase; the sequence is RVSYFYEPTI…WCYETAVAVG (314 aa). Residue His-153 is the Proton donor/acceptor of the active site. Zn(2+)-binding residues include Asp-188, His-190, and Asp-276. The segment at 389–471 is disordered; the sequence is PSVQFQHTPP…PEPDVNPPSS (83 aa). A compositionally biased stretch (acidic residues) spans 453–463; the sequence is GEDEMDDDNPE.

It belongs to the histone deacetylase family. HD type 1 subfamily. As to quaternary structure, interacts with Coi1, which functions in an SCF complex that recruits regulators for ubiquitination. Interacts with AHL22. Interacts with AS1. Part of the AS1 repressor complex composed of AS1, LBD6/AS2 and HDA6. Binds to EBS and SHL. Interacts with MBD6. Interacts with HDA5. Interacts with FLD. Zn(2+) serves as cofactor. As to expression, not detected in leaves, stems, flowers and young siliques.

The protein resides in the nucleus. The protein localises to the nucleolus. It catalyses the reaction N(6)-acetyl-L-lysyl-[histone] + H2O = L-lysyl-[histone] + acetate. Its activity is regulated as follows. Inhibited by trichostatin A. Its function is as follows. Responsible for the deacetylation of lysine residues on the N-terminal part of the core histones (H2A, H2B, H3 and H4). Might remove acetyl residues only from specific targets, such as rDNA repeats or complex transgenes. Histone deacetylation gives a tag for epigenetic repression and plays an important role in transcriptional regulation, cell cycle progression and developmental events. Histone deacetylases act via the formation of large multiprotein complexes. Required for rRNA gene silencing in nucleolar dominance. Plays a role in transgene silencing, but this effect seems to bee independent of the histone deacetylase activity. Part of the AS1 repressor complex to regulate the KNOX expression in leaf development. Binds to KNAT1, KNAT2, and KNATM chromatin. Involved in the regulation of flowering time. Forms a histone deacetylase complex with HDA5, FLD and MSI4/FVE that represses FLC gene expression to control flowering time. This is Histone deacetylase 6 from Arabidopsis thaliana (Mouse-ear cress).